The following is a 961-amino-acid chain: Valine--tRNA ligase (961 aa).

The short motif at 48–58 (PNVTGSLHMGH) is the 'HIGH' region element. A 'KMSKS' region motif is present at residues 560–564 (KMSKS). Lys-563 provides a ligand contact to ATP. A coiled-coil region spans residues 892–961 (FINKDTELAR…QAQFKAIEAL (70 aa)).

This sequence belongs to the class-I aminoacyl-tRNA synthetase family. ValS type 1 subfamily. Monomer.

It is found in the cytoplasm. It carries out the reaction tRNA(Val) + L-valine + ATP = L-valyl-tRNA(Val) + AMP + diphosphate. Its function is as follows. Catalyzes the attachment of valine to tRNA(Val). As ValRS can inadvertently accommodate and process structurally similar amino acids such as threonine, to avoid such errors, it has a 'posttransfer' editing activity that hydrolyzes mischarged Thr-tRNA(Val) in a tRNA-dependent manner. The polypeptide is Valine--tRNA ligase (Haemophilus ducreyi (strain 35000HP / ATCC 700724)).